Consider the following 103-residue polypeptide: UPF0145 protein PBPRB0184 (103 aa).

This sequence belongs to the UPF0145 family.

This Photobacterium profundum (strain SS9) protein is UPF0145 protein PBPRB0184.